The sequence spans 235 residues: Attacin-E (235 aa).

The signal sequence occupies residues 1–19 (MFGKIVFLLLVALCAGVQS). Positions 20–47 (RYLIVSEPVYYIEHYEEPELLASSRVRR) are excised as a propeptide.

This sequence belongs to the attacin/sarcotoxin-2 family. Post-translationally, attacin F appears to be derived by proteolytic digestion of attacin E.

The protein resides in the secreted. Functionally, hemolymph antibacterial protein. In Hyalophora cecropia (Cecropia moth), this protein is Attacin-E.